A 170-amino-acid chain; its full sequence is Cytochrome P450 monooxygenase oryQ (170 aa).

Position 85 (C85) interacts with heme.

It belongs to the cytochrome P450 family. Heme serves as cofactor.

It functions in the pathway secondary metabolite biosynthesis. Functionally, cytochrome P450 monooxygenase; part of the gene cluster that mediates the biosynthesis of oryzines, natural products with an unusual maleidride backbone. The two subunits of the fungal fatty acid synthase oryfasA and oryfasB probably form octenoic acid. This fatty acid is most likely activated by the acyl-CoA ligase oryP to give octenyl-CoA before the citrate synthase-like protein oryE catalyzes condensation with oxaloacetate to form tricarboxylic acid. The next steps of the pathways are conjectural, but a favorite possible route has been proposed, beginning with decarboxylation and concomitant dehydration by the decarboxylase oryM, followed by tautomerization, which may lead to the production of a diene intermediate. Reduction of this diene intermediate could give the known metabolite piliformic acid. On the pathway to oryzine B and oryzine A, however, hydroxylation of the diene by the alpha-ketoglutarate-dependent dioxygenase oryG and lactonisation by the lactonohydrolases oryH or oryL could give oryzine B directly. Finally, enoyl reduction by the dehydrogenase oryD would then convert oryzine B into oryzine A. In Aspergillus oryzae (strain ATCC 42149 / RIB 40) (Yellow koji mold), this protein is Cytochrome P450 monooxygenase oryQ.